A 646-amino-acid polypeptide reads, in one-letter code: Microtubule-associated protein 9 (646 aa).

Ser2 bears the N-acetylserine mark. A Phosphotyrosine modification is found at Tyr12. Disordered stretches follow at residues 75-226 (DFHI…QTEE), 242-418 (SLTS…LEPD), 491-511 (RLEE…KGEA), 531-554 (RREK…KKKD), 570-597 (LKQK…KDKQ), and 609-646 (KERQ…SKVF). Composition is skewed to polar residues over residues 105-119 (ALDS…SSPD) and 157-167 (RSTSSGETSSG). Over residues 188 to 204 (SHTEEGVRPGVDKEHSI) the composition is skewed to basic and acidic residues. Composition is skewed to polar residues over residues 205–222 (SEAS…GTEL), 280–291 (LLSNENEGSSVL), and 330–340 (PLLSTSPSVIT). Basic and acidic residues predominate over residues 346 to 357 (EPAKKANEDRNT). Over residues 386–398 (TKRSPSAATSSHY) the composition is skewed to polar residues. Residues 405-418 (LDQKQPRKQSLEPD) are compositionally biased toward basic and acidic residues. Residues 442–596 (MHRIKRIESE…KRAEKKDKDK (155 aa)) adopt a coiled-coil conformation. Over residues 637–646 (PSRTAPSKVF) the composition is skewed to polar residues.

As to quaternary structure, binds to purified microtubules via its C-terminus.

It is found in the cytoplasm. The protein localises to the cytoskeleton. It localises to the spindle. Functionally, involved in organization of the bipolar mitotic spindle. Required for bipolar spindle assembly, mitosis progression and cytokinesis. May act by stabilizing interphase microtubules. The polypeptide is Microtubule-associated protein 9 (Map9) (Mus musculus (Mouse)).